A 340-amino-acid polypeptide reads, in one-letter code: Heat-inducible transcription repressor HrcA (340 aa).

This sequence belongs to the HrcA family.

Negative regulator of class I heat shock genes (grpE-dnaK-dnaJ and groELS operons). Prevents heat-shock induction of these operons. This is Heat-inducible transcription repressor HrcA from Mycoplasma mycoides subsp. mycoides SC (strain CCUG 32753 / NCTC 10114 / PG1).